The chain runs to 519 residues: MYLLPLPAAARVALRRLGVRGLWDRGLSTADMTKGLVLGIYSKDKDDDVPQFTSAGENFNKLVSGRLREMLNISGPPLKAGKTRTFYGLHQDFPSVVVVGLGKRSAGVDDQENWHEGKENIRAAVAAGCRQVQDLELPSVEVDPCGDAQAAAEGAVLGLYEYDDLKQKKKVAVSAKLHGSGDLEAWEKGVLFASGQNLARQLMESPANEMTPTRFAEVIEKNLKSASSKTEVHIRTKSWIEEQEMGSFLSVAKGSEEPPVFLEIHYTGSPNATEAPLVFVGKGITFDSGGISIKASANMDLMRADMGGAATICSAIVSAAKLNLPINIIGLAPLCENMPSGKANKPGDVVRARNGKTIQVDNTDAEGRLILADALCYAHTFNPKVIINAATLTGAMDVALGSGATGVFTNSSWLWNKLFEASVETGDRVWRMPLFEHYTRQVIDCQLADVNNLGKYRSAGACTAAAFLREFVTHTKWAHLDIAGVMTNKDEIPYLRKGMSGRPTRTLIEFLLRFSKDSS.

A Phosphoserine modification is found at S42. K45 is subject to N6-succinyllysine. At S54 the chain carries Phosphoserine. N6-succinyllysine occurs at positions 61 and 103. Residues S180 and S194 each carry the phosphoserine modification. L202 and M203 together coordinate Zn(2+). K221 carries the N6-acetyllysine; alternate modification. K221 carries the post-translational modification N6-succinyllysine; alternate. A Phosphoserine modification is found at S238. Positions 282 and 287 each coordinate Zn(2+). Substrate is bound by residues K282, D287, S292, and K294. D287 serves as a coordination point for Mg(2+). Residue K294 is part of the active site. Residues R303, D305, D364, and E366 each contribute to the Zn(2+) site. Substrate is bound by residues D305 and D364. Mg(2+) is bound by residues D364 and E366. Residue R368 is part of the active site. The residue at position 455 (K455) is an N6-acetyllysine; alternate. Residue K455 is modified to N6-succinyllysine; alternate. The residue at position 476 (K476) is an N6-succinyllysine. K489 carries the N6-acetyllysine; alternate modification. The residue at position 489 (K489) is an N6-succinyllysine; alternate.

The protein belongs to the peptidase M17 family. In terms of assembly, homohexamer. Zn(2+) serves as cofactor. Mn(2+) is required as a cofactor.

The protein resides in the cytoplasm. The catalysed reaction is Release of an N-terminal amino acid, Xaa-|-Yaa-, in which Xaa is preferably Leu, but may be other amino acids including Pro although not Arg or Lys, and Yaa may be Pro. Amino acid amides and methyl esters are also readily hydrolyzed, but rates on arylamides are exceedingly low.. It catalyses the reaction an S-substituted L-cysteinylglycine + H2O = an S-substituted L-cysteine + glycine. The enzyme catalyses L-cysteinylglycine + H2O = L-cysteine + glycine. It carries out the reaction S-benzyl-L-cysteinylglycine + H2O = S-benzyl-L-cysteine + glycine. The catalysed reaction is Release of N-terminal proline from a peptide.. With respect to regulation, bimane-S-cysteinylglycine-hydrolyzing activity is inhibited by o-phenanthroline or bestatin, and is activated by the addition of zinc chloride. Cytosolic metallopeptidase that catalyzes the removal of unsubstituted N-terminal hydrophobic amino acids from various peptides. The presence of Zn(2+) ions is essential for the peptidase activity, and the association with other cofactors can modulate the substrate spectificity of the enzyme. For instance, in the presence of Mn(2+), it displays a specific Cys-Gly hydrolyzing activity of Cys-Gly-S-conjugates. Involved in the metabolism of glutathione and in the degradation of glutathione S-conjugates, which may play a role in the control of the cell redox status. This chain is Cytosol aminopeptidase, found in Rattus norvegicus (Rat).